We begin with the raw amino-acid sequence, 168 residues long: Endoribonuclease YbeY (168 aa).

His123, His127, and His133 together coordinate Zn(2+).

The protein belongs to the endoribonuclease YbeY family. Zn(2+) is required as a cofactor.

It is found in the cytoplasm. In terms of biological role, single strand-specific metallo-endoribonuclease involved in late-stage 70S ribosome quality control and in maturation of the 3' terminus of the 16S rRNA. The sequence is that of Endoribonuclease YbeY from Francisella tularensis subsp. holarctica (strain LVS).